The primary structure comprises 288 residues: Transposase InsF for insertion sequence IS3A (288 aa).

The Integrase catalytic domain occupies 124–287 (YASGPNQKWA…SPEQFENKNL (164 aa)).

Belongs to the transposase IS3/IS150/IS904 family.

Involved in the transposition of the insertion sequence IS3. In Escherichia coli (strain K12), this protein is Transposase InsF for insertion sequence IS3A (insF1).